Reading from the N-terminus, the 277-residue chain is Probable cyclic nucleotide phosphodiesterase MCR_0369 (277 aa).

Residues Asp-17, His-19, Asp-53, Asn-83, His-165, His-204, and His-206 each coordinate Fe cation. Residues His-19, Asp-53, and 83–84 each bind AMP; that span reads NH. His-206 contributes to the AMP binding site.

This sequence belongs to the cyclic nucleotide phosphodiesterase class-III family. Requires Fe(2+) as cofactor.

The sequence is that of Probable cyclic nucleotide phosphodiesterase MCR_0369 from Moraxella catarrhalis (strain BBH18).